A 39-amino-acid polypeptide reads, in one-letter code: Photosystem II reaction center protein J (39 aa).

Residues 7–27 (IPLWLVATIAGLGVIAVLGLF) traverse the membrane as a helical segment.

The protein belongs to the PsbJ family. As to quaternary structure, PSII is composed of 1 copy each of membrane proteins PsbA, PsbB, PsbC, PsbD, PsbE, PsbF, PsbH, PsbI, PsbJ, PsbK, PsbL, PsbM, PsbT, PsbX, PsbY, PsbZ, Psb30/Ycf12, peripheral proteins PsbO, CyanoQ (PsbQ), PsbU, PsbV and a large number of cofactors. It forms dimeric complexes.

Its subcellular location is the cellular thylakoid membrane. One of the components of the core complex of photosystem II (PSII). PSII is a light-driven water:plastoquinone oxidoreductase that uses light energy to abstract electrons from H(2)O, generating O(2) and a proton gradient subsequently used for ATP formation. It consists of a core antenna complex that captures photons, and an electron transfer chain that converts photonic excitation into a charge separation. The protein is Photosystem II reaction center protein J of Microcystis aeruginosa (strain NIES-843 / IAM M-2473).